Reading from the N-terminus, the 461-residue chain is D-phenylhydantoinase (461 aa).

The a divalent metal cation site is built by histidine 59, histidine 61, and lysine 151. Position 151 is an N6-carboxylysine (lysine 151). Substrate is bound at residue tyrosine 156. The a divalent metal cation site is built by histidine 182 and histidine 239. Substrate is bound at residue serine 286. Aspartate 313 provides a ligand contact to a divalent metal cation. Asparagine 335 contributes to the substrate binding site.

This sequence belongs to the metallo-dependent hydrolases superfamily. Hydantoinase/dihydropyrimidinase family. In terms of assembly, homotetramer. It depends on a divalent metal cation as a cofactor. In terms of processing, carboxylation allows a single lysine to coordinate two divalent metal cations.

The enzyme catalyses D-5-phenylhydantoin + H2O = N-carbamoyl-D-phenylglycine + H(+). Functionally, catalyzes the stereospecific hydrolysis of the cyclic amide bond of D-hydantoin derivatives with an aromatic side chains at the 5'-position. Has no activity on dihydropyrimidines. The physiological function is unknown. The protein is D-phenylhydantoinase of Escherichia coli O7:K1 (strain IAI39 / ExPEC).